The primary structure comprises 426 residues: Tektin-1 (426 aa).

Coiled-coil stretches lie at residues 21 to 84, 268 to 307, and 339 to 383; these read KNQY…LEQL, LKET…LDQE, and KEVG…ENTI. The segment at 396–426 is disordered; sequence SNPLRDGGDQGQWARACAPTPSAEDGTSHTD.

This sequence belongs to the tektin family. Microtubule inner protein component of sperm flagellar doublet microtubules. Ubiquitinated, leading to its degradation. Deubiquitinated by USP16, promoting its stability.

Its subcellular location is the cytoplasm. It localises to the cytoskeleton. The protein localises to the cilium axoneme. It is found in the flagellum axoneme. Microtubule inner protein (MIP) part of the dynein-decorated doublet microtubules (DMTs) in cilia and flagellar axoneme. Forms filamentous polymers in the walls of ciliary and flagellar microtubules. The sequence is that of Tektin-1 (TEKT1) from Canis lupus familiaris (Dog).